We begin with the raw amino-acid sequence, 250 residues long: Pyrroloquinoline-quinone synthase (250 aa).

Belongs to the PqqC family.

It catalyses the reaction 6-(2-amino-2-carboxyethyl)-7,8-dioxo-1,2,3,4,7,8-hexahydroquinoline-2,4-dicarboxylate + 3 O2 = pyrroloquinoline quinone + 2 H2O2 + 2 H2O + H(+). It functions in the pathway cofactor biosynthesis; pyrroloquinoline quinone biosynthesis. Its function is as follows. Ring cyclization and eight-electron oxidation of 3a-(2-amino-2-carboxyethyl)-4,5-dioxo-4,5,6,7,8,9-hexahydroquinoline-7,9-dicarboxylic-acid to PQQ. This chain is Pyrroloquinoline-quinone synthase, found in Ectopseudomonas mendocina (strain ymp) (Pseudomonas mendocina).